Reading from the N-terminus, the 247-residue chain is Lipoprotein-releasing system ATP-binding protein LolD 2 (247 aa).

The ABC transporter domain maps to 19-247 (LEARKLVKSY…QDGRLQACGG (229 aa)). 56-63 (GASGSGKT) contacts ATP.

Belongs to the ABC transporter superfamily. Lipoprotein translocase (TC 3.A.1.125) family. As to quaternary structure, the complex is composed of two ATP-binding proteins (LolD) and two transmembrane proteins (LolC and LolE).

It localises to the cell inner membrane. Its function is as follows. Part of the ABC transporter complex LolCDE involved in the translocation of mature outer membrane-directed lipoproteins, from the inner membrane to the periplasmic chaperone, LolA. Responsible for the formation of the LolA-lipoprotein complex in an ATP-dependent manner. This Chlorobaculum tepidum (strain ATCC 49652 / DSM 12025 / NBRC 103806 / TLS) (Chlorobium tepidum) protein is Lipoprotein-releasing system ATP-binding protein LolD 2.